The primary structure comprises 138 residues: Acidic phospholipase A2 CH-E6' (138 aa).

An N-terminal signal peptide occupies residues M1–G16. 7 cysteine pairs are disulfide-bonded: C42–C131, C44–C60, C59–C111, C65–C138, C66–C104, C73–C97, and C91–C102. Residues Y43, G45, and G47 each coordinate Ca(2+). Residue H63 is part of the active site. Residue D64 participates in Ca(2+) binding. Residue D105 is part of the active site.

The protein belongs to the phospholipase A2 family. Group II subfamily. D49 sub-subfamily. The cofactor is Ca(2+). As to expression, expressed by the venom gland.

The protein localises to the secreted. The enzyme catalyses a 1,2-diacyl-sn-glycero-3-phosphocholine + H2O = a 1-acyl-sn-glycero-3-phosphocholine + a fatty acid + H(+). Snake venom phospholipase A2 (PLA2) that shows high lipolytic and weak ADP-induced platelet aggregation activities. Also shows weak anticoagulant activity. PLA2 catalyzes the calcium-dependent hydrolysis of the 2-acyl groups in 3-sn-phosphoglycerides. The sequence is that of Acidic phospholipase A2 CH-E6' from Crotalus horridus (Timber rattlesnake).